The chain runs to 443 residues: KICSTOR complex protein ITFG2 (443 aa).

Residues 19–48 (FPHAICLGDVDNDALNELVVGDTSGKLSVY) form an FG-GAP 1; atypical repeat. At Ser104 the chain carries Phosphoserine. One copy of the FG-GAP 2; atypical repeat lies at 125–154 (NTKVMLISDIDGDGCYELVVGYTDRVVRAF). Ser219 is subject to Phosphoserine.

In terms of assembly, part of the KICSTOR complex composed of KPTN, ITFG2, KICS2 and SZT2. SZT2 probably serves as a link between the other three proteins in the KICSTOR complex and may mediate the direct interaction with the GATOR complex via GATOR1. The KICSTOR complex interacts directly with the GATOR1 complex and most probably indirectly with the GATOR2 complex in an amino acid-independent manner.

The protein localises to the lysosome membrane. As part of the KICSTOR complex functions in the amino acid-sensing branch of the TORC1 signaling pathway. Recruits, in an amino acid-independent manner, the GATOR1 complex to the lysosomal membranes and allows its interaction with GATOR2 and the RAG GTPases. Functions upstream of the RAG GTPases and is required to negatively regulate mTORC1 signaling in absence of amino acids. In absence of the KICSTOR complex mTORC1 is constitutively localized to the lysosome and activated. The KICSTOR complex is also probably involved in the regulation of mTORC1 by glucose. This Mus musculus (Mouse) protein is KICSTOR complex protein ITFG2.